Here is a 37-residue protein sequence, read N- to C-terminus: Large ribosomal subunit protein bL36 (37 aa).

The protein belongs to the bacterial ribosomal protein bL36 family.

The protein is Large ribosomal subunit protein bL36 of Nostoc sp. (strain PCC 7120 / SAG 25.82 / UTEX 2576).